A 639-amino-acid polypeptide reads, in one-letter code: Putative oxidoreductase UacF (639 aa).

4Fe-4S ferredoxin-type domains lie at 3-32 (KFIA…ENWP), 47-77 (KGQA…TFQS), 78-107 (DSVQ…MVDT), 110-139 (QKCD…LMDD), and 201-235 (QQAT…YIRL). 20 residues coordinate [4Fe-4S] cluster: Cys12, Cys15, Cys18, Cys22, Cys56, Cys59, Cys64, Cys68, Cys87, Cys90, Cys93, Cys97, Cys112, Cys115, Cys125, Cys129, Cys210, Cys213, Cys219, and Cys223.

Requires [4Fe-4S] cluster as cofactor.

Involved in formate-dependent uric acid degradation under microaerobic and anaerobic conditions. May reduce the enzymes necessary for uric acid degradation. The chain is Putative oxidoreductase UacF from Escherichia coli (strain K12).